Consider the following 164-residue polypeptide: FMN reductase (NADH) RutF (164 aa).

This sequence belongs to the non-flavoprotein flavin reductase family. RutF subfamily.

It carries out the reaction FMNH2 + NAD(+) = FMN + NADH + 2 H(+). Functionally, catalyzes the reduction of FMN to FMNH2 which is used to reduce pyrimidine by RutA via the Rut pathway. This chain is FMN reductase (NADH) RutF, found in Escherichia coli O81 (strain ED1a).